The primary structure comprises 154 residues: Large-conductance mechanosensitive channel (154 aa).

A run of 3 helical transmembrane segments spans residues 16–36 (VLGLGIAVIMGDAFNKIISSV), 39–59 (DLLMPIIGAVFGGVDFSGFFI), and 89–109 (GQFLTVVVNFVIVAFILFMIM).

This sequence belongs to the MscL family. In terms of assembly, homopentamer.

The protein localises to the cell inner membrane. Its function is as follows. Channel that opens in response to stretch forces in the membrane lipid bilayer. May participate in the regulation of osmotic pressure changes within the cell. The polypeptide is Large-conductance mechanosensitive channel (Zymomonas mobilis subsp. mobilis (strain ATCC 31821 / ZM4 / CP4)).